The chain runs to 77 residues: Acyl carrier protein (77 aa).

A Carrier domain is found at 2 to 77 (SSIEKRVKEI…DAIDYITEHT (76 aa)). Serine 37 bears the O-(pantetheine 4'-phosphoryl)serine mark.

This sequence belongs to the acyl carrier protein (ACP) family. In terms of processing, 4'-phosphopantetheine is transferred from CoA to a specific serine of apo-ACP by AcpS. This modification is essential for activity because fatty acids are bound in thioester linkage to the sulfhydryl of the prosthetic group.

The protein resides in the cytoplasm. It participates in lipid metabolism; fatty acid biosynthesis. Its function is as follows. Carrier of the growing fatty acid chain in fatty acid biosynthesis. The chain is Acyl carrier protein from Geobacter sulfurreducens (strain ATCC 51573 / DSM 12127 / PCA).